The sequence spans 529 residues: MAVAGAMVMSGALLLLHLLAFTCVACNGGSELPPISRRSFPKGFIFGTSSSSYQFEGGAVLGGRGPSIWDTFTHQSPDKITDRSNGDVACDSYHLYKEDVRSMKEMGMDAYRFSISWSRILPSALSGGVNREGISYYNNLINELLSKGVQPFVTLFHWDSPQALEDKYKGFLSPNIINDYKEYAETCFKEFGDRVKHWITFNEPWTFCSMGYASGIMAPGRCSSWEVGKCRVGDSGREPYTACHHQLLAHAETVRLYKEKYQALQKGKIGIILNADWFVPLSQSKSSSDAARRALDFMLGWFMDPLIRGDYPLSMRELVGNRLPEFSKEQSGMVKGAFDFIGLNYYTSSYADNDPPSHGHNNSYNTDAHAKITGSRNGIPIGPQAASFWFHIYPEGICEMLLYVKENYGNPTIYITENGVDEVNNKTMPLEEALKDDTRIEYYHKHLLALLSAMRDGANVKGYFAWSLLDNFEWAEGYTVRFGINFVDYDDGMKRYPKNSARWFKKFLQKSNRDGNKRLKRVAYNAFSN.

The first 25 residues, 1-25 (MAVAGAMVMSGALLLLHLLAFTCVA), serve as a signal peptide directing secretion. A beta-D-glucoside-binding positions include Q54, H157, and 202–203 (NE). E203 serves as the catalytic Proton donor. C222 and C230 are oxidised to a cystine. Y346 serves as a coordination point for a beta-D-glucoside. The N-linked (GlcNAc...) asparagine glycan is linked to N361. Residue E417 coordinates a beta-D-glucoside. Catalysis depends on E417, which acts as the Nucleophile. N-linked (GlcNAc...) asparagine glycosylation occurs at N425. A beta-D-glucoside is bound by residues W466, 473–474 (EW), and F482.

The protein belongs to the glycosyl hydrolase 1 family.

It carries out the reaction Hydrolysis of terminal, non-reducing beta-D-glucosyl residues with release of beta-D-glucose.. The protein is Beta-glucosidase 11 (BGLU11) of Oryza sativa subsp. japonica (Rice).